A 977-amino-acid polypeptide reads, in one-letter code: Glycine dehydrogenase (decarboxylating) (977 aa).

Position 702 is an N6-(pyridoxal phosphate)lysine (Lys702).

It belongs to the GcvP family. The glycine cleavage system is composed of four proteins: P, T, L and H. Pyridoxal 5'-phosphate serves as cofactor.

The catalysed reaction is N(6)-[(R)-lipoyl]-L-lysyl-[glycine-cleavage complex H protein] + glycine + H(+) = N(6)-[(R)-S(8)-aminomethyldihydrolipoyl]-L-lysyl-[glycine-cleavage complex H protein] + CO2. Its function is as follows. The glycine cleavage system catalyzes the degradation of glycine. The P protein binds the alpha-amino group of glycine through its pyridoxal phosphate cofactor; CO(2) is released and the remaining methylamine moiety is then transferred to the lipoamide cofactor of the H protein. The sequence is that of Glycine dehydrogenase (decarboxylating) from Xanthomonas axonopodis pv. citri (strain 306).